The chain runs to 245 residues: 23S rRNA (guanosine-2'-O-)-methyltransferase RlmB (245 aa).

G197, I217, and L226 together coordinate S-adenosyl-L-methionine.

The protein belongs to the class IV-like SAM-binding methyltransferase superfamily. RNA methyltransferase TrmH family. RlmB subfamily.

It localises to the cytoplasm. It carries out the reaction guanosine(2251) in 23S rRNA + S-adenosyl-L-methionine = 2'-O-methylguanosine(2251) in 23S rRNA + S-adenosyl-L-homocysteine + H(+). Specifically methylates the ribose of guanosine 2251 in 23S rRNA. This chain is 23S rRNA (guanosine-2'-O-)-methyltransferase RlmB, found in Photobacterium profundum (strain SS9).